Consider the following 303-residue polypeptide: Glycine--tRNA ligase alpha subunit (303 aa).

Belongs to the class-II aminoacyl-tRNA synthetase family. As to quaternary structure, tetramer of two alpha and two beta subunits.

The protein resides in the cytoplasm. The catalysed reaction is tRNA(Gly) + glycine + ATP = glycyl-tRNA(Gly) + AMP + diphosphate. In Enterobacter sp. (strain 638), this protein is Glycine--tRNA ligase alpha subunit.